The chain runs to 545 residues: CTP synthase (545 aa).

Residues 1-265 are amidoligase domain; that stretch reads MSRFIFVTGG…DAIVVEKFGL (265 aa). A CTP-binding site is contributed by Ser-13. Ser-13 provides a ligand contact to UTP. 14 to 19 provides a ligand contact to ATP; it reads SLGKGI. Tyr-54 provides a ligand contact to L-glutamine. Asp-71 contacts ATP. Positions 71 and 139 each coordinate Mg(2+). Residues 146–148, 186–191, and Lys-222 contribute to the CTP site; these read DIE and KTKPTQ. UTP is bound by residues 186 to 191 and Lys-222; that span reads KTKPTQ. A Glutamine amidotransferase type-1 domain is found at 290–541; it reads TVGMVGKYIE…VAAALAEQKA (252 aa). Gly-351 serves as a coordination point for L-glutamine. Cys-378 functions as the Nucleophile; for glutamine hydrolysis in the catalytic mechanism. Residues 379–382, Glu-402, and Arg-469 each bind L-glutamine; that span reads LGMQ. Active-site residues include His-514 and Glu-516.

It belongs to the CTP synthase family. In terms of assembly, homotetramer.

It carries out the reaction UTP + L-glutamine + ATP + H2O = CTP + L-glutamate + ADP + phosphate + 2 H(+). It catalyses the reaction L-glutamine + H2O = L-glutamate + NH4(+). The enzyme catalyses UTP + NH4(+) + ATP = CTP + ADP + phosphate + 2 H(+). It functions in the pathway pyrimidine metabolism; CTP biosynthesis via de novo pathway; CTP from UDP: step 2/2. With respect to regulation, allosterically activated by GTP, when glutamine is the substrate; GTP has no effect on the reaction when ammonia is the substrate. The allosteric effector GTP functions by stabilizing the protein conformation that binds the tetrahedral intermediate(s) formed during glutamine hydrolysis. Inhibited by the product CTP, via allosteric rather than competitive inhibition. Catalyzes the ATP-dependent amination of UTP to CTP with either L-glutamine or ammonia as the source of nitrogen. Regulates intracellular CTP levels through interactions with the four ribonucleotide triphosphates. The protein is CTP synthase of Alcanivorax borkumensis (strain ATCC 700651 / DSM 11573 / NCIMB 13689 / SK2).